Reading from the N-terminus, the 382-residue chain is Lipid-A-disaccharide synthase (382 aa).

The protein belongs to the LpxB family.

It carries out the reaction 2-N,3-O-bis[(3R)-3-hydroxytetradecanoyl]-alpha-D-glucosaminyl 1-phosphate + UDP-2-N,3-O-bis[(3R)-3-hydroxytetradecanoyl]-alpha-D-glucosamine = lipid A disaccharide (E. coli) + UDP + H(+). It catalyses the reaction a lipid X + a UDP-2-N,3-O-bis[(3R)-3-hydroxyacyl]-alpha-D-glucosamine = a lipid A disaccharide + UDP + H(+). The protein operates within glycolipid biosynthesis; lipid IV(A) biosynthesis; lipid IV(A) from (3R)-3-hydroxytetradecanoyl-[acyl-carrier-protein] and UDP-N-acetyl-alpha-D-glucosamine: step 5/6. Condensation of UDP-2,3-diacylglucosamine and 2,3-diacylglucosamine-1-phosphate to form lipid A disaccharide, a precursor of lipid A, a phosphorylated glycolipid that anchors the lipopolysaccharide to the outer membrane of the cell. The sequence is that of Lipid-A-disaccharide synthase from Escherichia coli O127:H6 (strain E2348/69 / EPEC).